The chain runs to 298 residues: Bifunctional protein FolD (298 aa).

Residues 166–168, Ser-191, and Ile-232 each bind NADP(+); that span reads GRS.

It belongs to the tetrahydrofolate dehydrogenase/cyclohydrolase family. In terms of assembly, homodimer.

It catalyses the reaction (6R)-5,10-methylene-5,6,7,8-tetrahydrofolate + NADP(+) = (6R)-5,10-methenyltetrahydrofolate + NADPH. It carries out the reaction (6R)-5,10-methenyltetrahydrofolate + H2O = (6R)-10-formyltetrahydrofolate + H(+). The protein operates within one-carbon metabolism; tetrahydrofolate interconversion. Its function is as follows. Catalyzes the oxidation of 5,10-methylenetetrahydrofolate to 5,10-methenyltetrahydrofolate and then the hydrolysis of 5,10-methenyltetrahydrofolate to 10-formyltetrahydrofolate. The polypeptide is Bifunctional protein FolD (Erythrobacter litoralis (strain HTCC2594)).